Here is a 274-residue protein sequence, read N- to C-terminus: uncharacterized protein (274 aa).

Residues 1-19 (MKRINKVLLSLLCLVIAYA) form the signal peptide.

This is an uncharacterized protein from Rickettsia prowazekii (strain Madrid E).